A 302-amino-acid polypeptide reads, in one-letter code: CRISPR-associated endonuclease Cas1 1 (302 aa).

Positions 159, 219, and 234 each coordinate Mn(2+).

It belongs to the CRISPR-associated endonuclease Cas1 family. As to quaternary structure, homodimer, forms a heterotetramer with a Cas2 homodimer. It depends on Mg(2+) as a cofactor. The cofactor is Mn(2+).

CRISPR (clustered regularly interspaced short palindromic repeat), is an adaptive immune system that provides protection against mobile genetic elements (viruses, transposable elements and conjugative plasmids). CRISPR clusters contain spacers, sequences complementary to antecedent mobile elements, and target invading nucleic acids. CRISPR clusters are transcribed and processed into CRISPR RNA (crRNA). Acts as a dsDNA endonuclease. Involved in the integration of spacer DNA into the CRISPR cassette. This chain is CRISPR-associated endonuclease Cas1 1, found in Pyrobaculum aerophilum (strain ATCC 51768 / DSM 7523 / JCM 9630 / CIP 104966 / NBRC 100827 / IM2).